A 141-amino-acid polypeptide reads, in one-letter code: Large ribosomal subunit protein uL11 (141 aa).

It belongs to the universal ribosomal protein uL11 family. In terms of assembly, part of the ribosomal stalk of the 50S ribosomal subunit. Interacts with L10 and the large rRNA to form the base of the stalk. L10 forms an elongated spine to which L12 dimers bind in a sequential fashion forming a multimeric L10(L12)X complex. One or more lysine residues are methylated.

Its function is as follows. Forms part of the ribosomal stalk which helps the ribosome interact with GTP-bound translation factors. In Maridesulfovibrio salexigens (strain ATCC 14822 / DSM 2638 / NCIMB 8403 / VKM B-1763) (Desulfovibrio salexigens), this protein is Large ribosomal subunit protein uL11.